Consider the following 232-residue polypeptide: Phosphatidylserine decarboxylase proenzyme (232 aa).

Residue S190 is the Schiff-base intermediate with substrate; via pyruvic acid of the active site. S190 carries the post-translational modification Pyruvic acid (Ser); by autocatalysis.

This sequence belongs to the phosphatidylserine decarboxylase family. PSD-A subfamily. In terms of assembly, heterodimer of a large membrane-associated beta subunit and a small pyruvoyl-containing alpha subunit. Pyruvate serves as cofactor. In terms of processing, is synthesized initially as an inactive proenzyme. Formation of the active enzyme involves a self-maturation process in which the active site pyruvoyl group is generated from an internal serine residue via an autocatalytic post-translational modification. Two non-identical subunits are generated from the proenzyme in this reaction, and the pyruvate is formed at the N-terminus of the alpha chain, which is derived from the carboxyl end of the proenzyme. The post-translation cleavage follows an unusual pathway, termed non-hydrolytic serinolysis, in which the side chain hydroxyl group of the serine supplies its oxygen atom to form the C-terminus of the beta chain, while the remainder of the serine residue undergoes an oxidative deamination to produce ammonia and the pyruvoyl prosthetic group on the alpha chain.

It is found in the cell membrane. It catalyses the reaction a 1,2-diacyl-sn-glycero-3-phospho-L-serine + H(+) = a 1,2-diacyl-sn-glycero-3-phosphoethanolamine + CO2. The protein operates within phospholipid metabolism; phosphatidylethanolamine biosynthesis; phosphatidylethanolamine from CDP-diacylglycerol: step 2/2. Functionally, catalyzes the formation of phosphatidylethanolamine (PtdEtn) from phosphatidylserine (PtdSer). In Rhizobium leguminosarum bv. trifolii (strain WSM2304), this protein is Phosphatidylserine decarboxylase proenzyme.